A 228-amino-acid polypeptide reads, in one-letter code: Ephrin-A5b (228 aa).

An N-terminal signal peptide occupies residues Met-1–Ser-20. The 134-residue stretch at Ala-29–Asn-162 folds into the Ephrin RBD domain. Asn-37 is a glycosylation site (N-linked (GlcNAc...) asparagine). Cystine bridges form between Cys-62/Cys-102 and Cys-90/Cys-151. The span at Leu-184–Arg-198 shows a compositional bias: basic and acidic residues. The segment at Leu-184–Gly-205 is disordered. A lipid anchor (GPI-anchor amidated serine) is attached at Ser-204. Residues Gly-205–Leu-228 constitute a propeptide, removed in mature form.

This sequence belongs to the ephrin family. As to expression, widespread expression in the embryo.

Its subcellular location is the cell membrane. Functionally, cell surface GPI-bound ligand for Eph receptors, a family of receptor tyrosine kinases which are crucial for migration, repulsion and adhesion during neuronal, vascular and epithelial development. Binds promiscuously Eph receptors residing on adjacent cells, leading to contact-dependent bidirectional signaling into neighboring cells. Induces compartmentalized signaling within a caveolae-like membrane microdomain when bound to the extracellular domain of its cognate receptor. This signaling event requires the activity of the Fyn tyrosine kinase. Activates the epha3 receptor to regulate cell-cell adhesion and cytoskeletal organization. With the receptor epha2 may regulate lens fiber cells shape and interactions and be important for lens transparency maintenance. May function actively to stimulate axon fasciculation. Controls axon growth and may be involved in the creation of the retino-tectal map. The chain is Ephrin-A5b (efna5b) from Danio rerio (Zebrafish).